A 2969-amino-acid chain; its full sequence is Histone-lysine N-methyltransferase ASH1L (2969 aa).

2 disordered regions span residues 1–70 (MDPR…TDAQ) and 118–143 (HPRK…RDPS). Residues 21–31 (KSPSAISTGTL) show a composition bias toward polar residues. Residue Ser22 is modified to Phosphoserine. 2 stretches are compositionally biased toward basic and acidic residues: residues 33–65 (SKRE…KDDG) and 127–143 (KMTD…RDPS). Lys34 participates in a covalent cross-link: Glycyl lysine isopeptide (Lys-Gly) (interchain with G-Cter in SUMO2). Lys375 carries the post-translational modification N6-acetyllysine. Residue Lys425 forms a Glycyl lysine isopeptide (Lys-Gly) (interchain with G-Cter in SUMO2) linkage. Polar residues predominate over residues 501-511 (IQQDSFSSSEK). Disordered regions lie at residues 501-525 (IQQD…QPPV), 537-583 (ASDV…PNPL), 824-845 (YKPK…PPKR), 878-966 (KQGL…EMEP), 1100-1128 (SEIL…AGFV), 1151-1231 (MKKA…EHVS), and 1243-1281 (SLKE…QLRN). Basic and acidic residues predominate over residues 512–522 (GSYETSKHEKQ). The span at 554–579 (NLPSPSPTVSVNPLTRSPPETSSQLA) shows a compositional bias: polar residues. Positions 887 to 897 (PKKRGRPKRQM) are enriched in basic residues. The a.T hook 1 DNA-binding region spans 887 to 899 (PKKRGRPKRQMRS). A compositionally biased stretch (basic and acidic residues) spans 920 to 932 (SKLESESDNHRSS). Over residues 936–949 (FESEDQLQDPDDLD) the composition is skewed to acidic residues. Composition is skewed to low complexity over residues 1100-1123 (SEIL…PVSS) and 1162-1175 (SPPT…SHLS). Ser1162 and Ser1170 each carry phosphoserine. The span at 1186 to 1211 (SPISESHSDETIPSDSGIGTDNNSTS) shows a compositional bias: polar residues. Residue Gln1220 is modified to N5-methylglutamine. Composition is skewed to basic residues over residues 1246–1256 (EKHKHKCKRRN) and 1266–1277 (KRQKRKRKKKYP). Residues 1347–1359 (KKKRGRPPKMREA) constitute a DNA-binding region (a.T hook 2). Disordered stretches follow at residues 1489 to 1508 (HREH…GSSR), 1580 to 1711 (SESS…ASGD), and 1741 to 1761 (ASAP…TLGK). 4 stretches are compositionally biased toward polar residues: residues 1496–1508 (EQPQ…GSSR), 1580–1598 (SESS…SEPA), 1605–1622 (NLFT…PNSS), and 1650–1680 (LPSN…STNC). Low complexity predominate over residues 1741 to 1751 (ASAPPSSSPGR). Residues 1847-1859 (KRRPGRPRKCPLQ) constitute a DNA-binding region (a.T hook 3). Residues 1911–1991 (KKGLKRKGWL…PRPPKKKYQK (81 aa)) form a disordered region. The segment at 2069–2288 (PDVPLYKKIR…KCRGIIGGKS (220 aa)) is catalytic domain. The AWS domain occupies 2091–2142 (YEATTCNCKKPDDDTRKGCVDDCLNRMIFAECSPNTCPCGEQCCNQRIQRHE). The SET domain occupies 2145–2261 (QCLERFRAEE…AGTELTYDYN (117 aa)). One can recognise a Post-SET domain in the interval 2269–2285 (KQQLCKCGFEKCRGIIG). The interval 2288–2346 (SQRVNGLTSSKNSQPMATHKKSGRSKEKRKSKHKLKKRRGHLSEEPSENINTPTRLTPQ) is disordered. The segment covering 2289-2303 (QRVNGLTSSKNSQPM) has biased composition (polar residues). Basic residues predominate over residues 2305–2327 (THKKSGRSKEKRKSKHKLKKRRG). N6-acetyllysine occurs at positions 2317, 2319, and 2323. Polar residues predominate over residues 2335–2346 (ENINTPTRLTPQ). One can recognise a Bromo domain in the interval 2444 to 2550 (RLAQIFKEIC…KAYYNARHEA (107 aa)). The segment at 2585–2631 (VIRCICGLYKDEGLMIQCDKCMVWQHCDCMGVNSDVEHYLCEQCDPR) adopts a PHD-type zinc-finger fold. Positions 2661–2798 (LLLRQGDCVY…KSAHLFYKIH (138 aa)) constitute a BAH domain. Disordered regions lie at residues 2825–2856 (SPHY…DLGQ) and 2876–2919 (NEIP…RRHN). Over residues 2842 to 2855 (WKSERSKPPLKDLG) the composition is skewed to basic and acidic residues.

It belongs to the class V-like SAM-binding methyltransferase superfamily. Histone-lysine methyltransferase family. SET2 subfamily. Methylated at Gln-1220 by N6AMT1. Widely expressed, with highest level in brain, heart and kidney.

The protein localises to the nucleus. Its subcellular location is the cell junction. It localises to the tight junction. It is found in the chromosome. The enzyme catalyses L-lysyl(36)-[histone H3] + 3 S-adenosyl-L-methionine = N(6),N(6),N(6)-trimethyl-L-lysyl(36)-[histone H3] + 3 S-adenosyl-L-homocysteine + 3 H(+). The catalysed reaction is L-lysyl(9)-[histone H3] + S-adenosyl-L-methionine = N(6)-methyl-L-lysyl(9)-[histone H3] + S-adenosyl-L-homocysteine + H(+). Functionally, histone methyltransferase specifically trimethylating 'Lys-36' of histone H3 forming H3K36me3. Also monomethylates 'Lys-9' of histone H3 (H3K9me1) in vitro. The physiological significance of the H3K9me1 activity is unclear. This Homo sapiens (Human) protein is Histone-lysine N-methyltransferase ASH1L (ASH1L).